The primary structure comprises 988 residues: Chitin synthase 1 (988 aa).

The segment at 29–75 (QHHWPPSSGSSLGRAPSIPLSSSNPRSPIRPSTPSRVSTDWTRPPAP) is disordered. Low complexity predominate over residues 44 to 66 (PSIPLSSSNPRSPIRPSTPSRVS). The next 7 membrane-spanning stretches (helical) occupy residues 577–596 (WLNG…KQIW), 616–636 (FISL…FYFV), 656–676 (IFVI…ILSL), 732–752 (IFTN…LMSF), 764–784 (SAQY…YAFC), 864–884 (YVVA…SEAY), and 911–931 (AIGS…EGRI). The interval 950-988 (AGLGSGFSESGKTGITSGSGMSGMSLSDVTSKISEKLAG) is disordered. The span at 957–976 (SESGKTGITSGSGMSGMSLS) shows a compositional bias: low complexity.

It belongs to the chitin synthase family. Class II subfamily.

The protein resides in the cell membrane. It carries out the reaction [(1-&gt;4)-N-acetyl-beta-D-glucosaminyl](n) + UDP-N-acetyl-alpha-D-glucosamine = [(1-&gt;4)-N-acetyl-beta-D-glucosaminyl](n+1) + UDP + H(+). Polymerizes chitin, a structural polymer of the cell wall and septum, by transferring the sugar moiety of UDP-GlcNAc to the non-reducing end of the growing chitin polymer. CHS1 mainly responsible for normal yeast cell reproductive growth. This chain is Chitin synthase 1, found in Exophiala dermatitidis (Black yeast-like fungus).